The sequence spans 350 residues: ALA-interacting subunit 5 (350 aa).

Residues 1 to 23 (MSSTAASSTVGGGGSSEISGVKK) form a disordered region. The residue at position 2 (S2) is an N-acetylserine. A helical membrane pass occupies residues 50-70 (VILTFLVAGVVFIPLGVICLF). 2 N-linked (GlcNAc...) asparagine glycosylation sites follow: N181 and N231. Residues 304 to 324 (FLGIAYLTVGSICLFLAVTFA) form a helical membrane-spanning segment.

Belongs to the CDC50/LEM3 family. As to quaternary structure, interacts with ALA2 and ALA3 in a heterologous system. In terms of tissue distribution, expressed in roots, leaves, stems, flowers and siliques.

The protein resides in the golgi apparatus membrane. The protein localises to the prevacuolar compartment membrane. Its subcellular location is the endoplasmic reticulum membrane. Its function is as follows. Required for the lipid transport activity of the ALA/ALIS P4-ATPase complex. The sequence is that of ALA-interacting subunit 5 (ALIS5) from Arabidopsis thaliana (Mouse-ear cress).